Reading from the N-terminus, the 76-residue chain is uncharacterized protein (76 aa).

The first 20 residues, 1 to 20 (MKNAVLVFLLLSVFALSVNA), serve as a signal peptide directing secretion.

As to expression, prismatic layer of shell (at protein level). Expressed primarily in the mantle with equal levels in the mantle edge and the mantle pallium.

It is found in the secreted. This is an uncharacterized protein from Margaritifera margaritifera (Freshwater pearl mussel).